Reading from the N-terminus, the 207-residue chain is Probable GTP-binding protein EngB (207 aa).

In terms of domain architecture, EngB-type G spans 23–203 (GAPEVCFVGR…GAHIENWISP (181 aa)). GTP-binding positions include 31–38 (GRSNAGKS), 58–62 (GRTRL), 83–86 (DLPG), 150–153 (TKAD), and 182–184 (FSS). 2 residues coordinate Mg(2+): serine 38 and threonine 60.

It belongs to the TRAFAC class TrmE-Era-EngA-EngB-Septin-like GTPase superfamily. EngB GTPase family. It depends on Mg(2+) as a cofactor.

Necessary for normal cell division and for the maintenance of normal septation. The sequence is that of Probable GTP-binding protein EngB from Bordetella bronchiseptica (strain ATCC BAA-588 / NCTC 13252 / RB50) (Alcaligenes bronchisepticus).